The chain runs to 340 residues: Proline-rich transmembrane protein 2 (340 aa).

Residues 1 to 261 are disordered; that stretch reads MAASSSEISE…AGPGVEGGEG (261 aa). Residues 1–268 are Cytoplasmic-facing; it reads MAASSSEISE…GEGTQKPRDY (268 aa). A Phosphoserine modification is found at Ser28. Thr74 carries the post-translational modification Phosphothreonine. 2 stretches are compositionally biased toward pro residues: residues 131 to 155 and 197 to 207; these read PPEP…PKPA and APEPHSPPSKK. Residue Ser238 is modified to Phosphoserine. Arg240 bears the Omega-N-methylarginine mark. Phosphoserine occurs at positions 248 and 249. Positions 269–289 form an intramembrane region, helical; sequence IILAILSCFCPMWPVNIVAFA. At 290-317 the chain is on the cytoplasmic side; it reads YAVMSRNSLQQGDVDGAQRLGRVAKLLS. Residues 318–338 traverse the membrane as a helical segment; it reads IVALVGGVLIIIASCVINLGV. The Extracellular portion of the chain corresponds to 339-340; it reads YK.

It belongs to the CD225/Dispanin family. As to quaternary structure, component of the outer core of AMPAR complex. AMPAR complex consists of an inner core made of 4 pore-forming GluA/GRIA proteins (GRIA1, GRIA2, GRIA3 and GRIA4) and 4 major auxiliary subunits arranged in a twofold symmetry. One of the two pairs of distinct binding sites is occupied either by CNIH2, CNIH3 or CACNG2, CACNG3. The other harbors CACNG2, CACNG3, CACNG4, CACNG8 or GSG1L. This inner core of AMPAR complex is complemented by outer core constituents binding directly to the GluA/GRIA proteins at sites distinct from the interaction sites of the inner core constituents. Outer core constituents include at least PRRT1, PRRT2, CKAMP44/SHISA9, FRRS1L and NRN1. The proteins of the inner and outer core serve as a platform for other, more peripherally associated AMPAR constituents. Alone or in combination, these auxiliary subunits control the gating and pharmacology of the AMPAR complex and profoundly impact their biogenesis and protein processing. Interacts with intersectin 1/ITSN1. Interacts with SNARE complex components, including SNAP25, STX1A, SYT1 and SYT2; this interaction may inhibit SNARE complex formation.

It is found in the cell membrane. The protein resides in the presynaptic cell membrane. The protein localises to the synapse. It localises to the cell projection. Its subcellular location is the axon. It is found in the cytoplasmic vesicle. The protein resides in the secretory vesicle. The protein localises to the synaptic vesicle membrane. It localises to the postsynaptic density membrane. Its subcellular location is the dendritic spine. In terms of biological role, as a component of the outer core of AMPAR complex, may be involved in synaptic transmission in the central nervous system. In hippocampal neurons, in presynaptic terminals, plays an important role in the final steps of neurotransmitter release, possibly by regulating Ca(2+)-sensing. In the cerebellum, may inhibit SNARE complex formation and down-regulate short-term facilitation. In Pongo abelii (Sumatran orangutan), this protein is Proline-rich transmembrane protein 2 (PRRT2).